A 754-amino-acid polypeptide reads, in one-letter code: Anaphase-promoting complex subunit cdh1 (754 aa).

A compositionally biased stretch (basic and acidic residues) spans 1 to 10 (MFHSEYEKKL). Disordered regions lie at residues 1–30 (MFHSEYEKKLRSPSKSPGSKTNYYNNYSNN), 47–116 (YEDN…TTTT), and 200–351 (IFNN…NNNN). Composition is skewed to low complexity over residues 50-116 (NGSN…TTTT) and 202-325 (NNNN…ININ). A compositionally biased stretch (polar residues) spans 326 to 339 (QSPSKKQSLMSATM). The span at 340–351 (NNNNSNNNNNNN) shows a compositional bias: low complexity. 4 WD repeats span residues 411–448 (KDDFYLNLIDWSSHNILAVGLDTSVYLWNATTSQVSKL), 452–492 (ESGQ…KIRE), 495–532 (GHNTRVNALAWNNHILSSGGKDKVILHHDVRDCSNNYT), and 537–576 (GHRHEICGLKWSPDGQQLASGGNDNLLNVWDHSMTQQPQQ). The tract at residues 570–598 (MTQQPQQQHQPPPPPPSSNTSSISQQQQQ) is disordered. The span at 587 to 598 (SNTSSISQQQQQ) shows a compositional bias: low complexity. WD repeat units lie at residues 610 to 652 (FHYA…SIQS), 654 to 695 (DTGS…PVTT), and 698 to 737 (GHTMRVLYLAVSPDGQTVCTGAGDNSLRFWNLFPSNKESS).

This sequence belongs to the WD repeat CDC20/Fizzy family. In terms of assembly, the APC/C is composed of at least 13 subunits that stay tightly associated throughout the cell cycle: anapc1, anapc2, anapc3, anapc4, anapc5, anapc6, anapc7, anapc8, anapc10, anapc11, cdc20, cdc26 and cdh1.

The protein resides in the nucleus. It functions in the pathway protein modification; protein ubiquitination. In terms of biological role, component of the anaphase promoting complex/cyclosome (APC/C), a cell cycle-regulated E3 ubiquitin-protein ligase complex that controls progression through mitosis and the G1 phase of the cell cycle. The chain is Anaphase-promoting complex subunit cdh1 (cdh1) from Dictyostelium discoideum (Social amoeba).